A 148-amino-acid polypeptide reads, in one-letter code: UPF0260 protein KPN78578_22800 (148 aa).

Belongs to the UPF0260 family.

This Klebsiella pneumoniae subsp. pneumoniae (strain ATCC 700721 / MGH 78578) protein is UPF0260 protein KPN78578_22800.